The chain runs to 280 residues: Putative pyruvate, phosphate dikinase regulatory protein (280 aa).

Residue 154–161 coordinates ADP; sequence GVSRTSKT.

Belongs to the pyruvate, phosphate/water dikinase regulatory protein family. PDRP subfamily.

The enzyme catalyses N(tele)-phospho-L-histidyl/L-threonyl-[pyruvate, phosphate dikinase] + ADP = N(tele)-phospho-L-histidyl/O-phospho-L-threonyl-[pyruvate, phosphate dikinase] + AMP + H(+). It catalyses the reaction N(tele)-phospho-L-histidyl/O-phospho-L-threonyl-[pyruvate, phosphate dikinase] + phosphate + H(+) = N(tele)-phospho-L-histidyl/L-threonyl-[pyruvate, phosphate dikinase] + diphosphate. In terms of biological role, bifunctional serine/threonine kinase and phosphorylase involved in the regulation of the pyruvate, phosphate dikinase (PPDK) by catalyzing its phosphorylation/dephosphorylation. This is Putative pyruvate, phosphate dikinase regulatory protein from Nitrobacter hamburgensis (strain DSM 10229 / NCIMB 13809 / X14).